The sequence spans 282 residues: Elongation factor Ts (282 aa).

The involved in Mg(2+) ion dislocation from EF-Tu stretch occupies residues 80 to 83 (TDFV).

The protein belongs to the EF-Ts family.

It is found in the cytoplasm. In terms of biological role, associates with the EF-Tu.GDP complex and induces the exchange of GDP to GTP. It remains bound to the aminoacyl-tRNA.EF-Tu.GTP complex up to the GTP hydrolysis stage on the ribosome. This is Elongation factor Ts (tsf) from Chlamydia trachomatis serovar D (strain ATCC VR-885 / DSM 19411 / UW-3/Cx).